The primary structure comprises 562 residues: F-box only protein 33 (562 aa).

In terms of domain architecture, F-box spans 68-114 (AAGAASLPSELIVHIFSFLPAPDRLRASASCSHWRECLFYPALWPQL). Positions 155–173 (GGGPGDGGSGGGTDTGTGG) are enriched in gly residues. The tract at residues 155-176 (GGGPGDGGSGGGTDTGTGGEDG) is disordered.

In terms of assembly, part of the SCF (SKP1-CUL1-F-box) E3 ubiquitin-protein ligase complex SCF(FBXO33) formed of CUL1, SKP1, RBX1 and FBXO33. Interacts via its N-terminus with YBX1 CSD domain. Directly interacts with SKP1 and CUL1.

Its pathway is protein modification; protein ubiquitination. Substrate recognition component of a SCF (SKP1-CUL1-F-box protein) E3 ubiquitin-protein ligase complex which mediates the ubiquitination and subsequent proteasomal degradation of target proteins. Probably recognizes and binds to phosphorylated target proteins. Recognizes YBX1. The protein is F-box only protein 33 (Fbxo33) of Mus musculus (Mouse).